Reading from the N-terminus, the 345-residue chain is MHGNSEMQKINQTSAMPEKTDVHWSGRFSVAPMLDWTDRHCRYFLRLLSRNTLLYTEMVTTGAIIHGKGDYLAYSEEEHPVALQLGGSDPAALAQCAKLAEARGYDEINLNVGCPSDRVQNGMFGACLMGNAQLVADCVKAMRDVVSIPVTVKTRIGIDDQDSYEFLCDFINTVSGKGECEMFIIHARKAWLSGLSPKENREIPPLDYPRVYQLKRDFPHLTMSINGGIKSLEEAKAHLQHMDGVMVGREAYQNPGILAAVDREIFGSSDTDADPVAVVRAMYPYIERELSQGTYLGHITRHMLGLFQGIPGARQWRRYLSENAHKAGADINVLEHALKLVADKR.

Residues 32–34 (PML) and Gln-84 each bind FMN. Cys-114 acts as the Proton donor in catalysis. FMN-binding positions include Lys-153, His-186, 226–228 (NGG), and 248–249 (GR).

The protein belongs to the Dus family. DusA subfamily. Requires FMN as cofactor.

The catalysed reaction is 5,6-dihydrouridine(20) in tRNA + NADP(+) = uridine(20) in tRNA + NADPH + H(+). It carries out the reaction 5,6-dihydrouridine(20) in tRNA + NAD(+) = uridine(20) in tRNA + NADH + H(+). The enzyme catalyses 5,6-dihydrouridine(20a) in tRNA + NADP(+) = uridine(20a) in tRNA + NADPH + H(+). It catalyses the reaction 5,6-dihydrouridine(20a) in tRNA + NAD(+) = uridine(20a) in tRNA + NADH + H(+). Its function is as follows. Catalyzes the synthesis of 5,6-dihydrouridine (D), a modified base found in the D-loop of most tRNAs, via the reduction of the C5-C6 double bond in target uridines. Specifically modifies U20 and U20a in tRNAs. In Escherichia coli O157:H7, this protein is tRNA-dihydrouridine(20/20a) synthase.